A 226-amino-acid chain; its full sequence is Orotidine 5'-phosphate decarboxylase (226 aa).

Substrate is bound by residues D8, K30, 58–67 (DLKLYDIPNT), T117, R177, Q186, G206, and R207. K60 acts as the Proton donor in catalysis.

Belongs to the OMP decarboxylase family. Type 1 subfamily. Homodimer.

The enzyme catalyses orotidine 5'-phosphate + H(+) = UMP + CO2. Its pathway is pyrimidine metabolism; UMP biosynthesis via de novo pathway; UMP from orotate: step 2/2. Catalyzes the decarboxylation of orotidine 5'-monophosphate (OMP) to uridine 5'-monophosphate (UMP). The chain is Orotidine 5'-phosphate decarboxylase from Campylobacter concisus (strain 13826).